Reading from the N-terminus, the 886-residue chain is CRM-domain containing factor CFM3, chloroplastic/mitochondrial (886 aa).

The N-terminal 70 residues, 1–70, are a transit peptide targeting the chloroplast and mitochondrion; sequence MAAAAMAISP…LDLRPEPSPS (70 aa). 2 disordered regions span residues 56–84 and 269–291; these read RPASALDLRPEPSPSSDSDDDAAFGTSRS and TKGTSKNTQTLGMKSSIKEPPGH. 3 consecutive CRM domains span residues 174 to 270, 378 to 475, and 590 to 690; these read LTLP…EPTK, PSLS…ELAE, and ETIT…SKLR. Over residues 270-281 the composition is skewed to polar residues; the sequence is KGTSKNTQTLGM. A disordered region spans residues 771 to 886; sequence SFDNSVAVQN…QSTELTNTCS (116 aa). Residues 793 to 827 show a composition bias toward acidic residues; it reads NSDDEGDYSDEDDDEDDDNDEEDGFDYENDDEDDV. Composition is skewed to polar residues over residues 841–852 and 869–886; these read DFGSSDSENYVS and DSRNSYSEQSTELTNTCS.

In terms of assembly, interacts with RNA. Part of large ribonucleo-protein particles that contain CAF1 and/or CAF2, and RNC1.

The protein localises to the plastid. It is found in the chloroplast. It localises to the mitochondrion. Binds specific group II introns in chloroplasts and facilitates their splicing. Acts on subgroup IIB introns. The substrates of the subgroup IIB also require the CRM domain proteins CAF1 or CAF2, with a simultaneous binding of CFM3 and CAF1 or CAF2. May influence the biogenesis of the mitochondrial small ribosomal subunit. The protein is CRM-domain containing factor CFM3, chloroplastic/mitochondrial of Oryza sativa subsp. japonica (Rice).